A 418-amino-acid polypeptide reads, in one-letter code: tRNA wybutosine-synthesizing protein 2 (418 aa).

S-adenosyl-L-methionine contacts are provided by residues Ser-228, Lys-235, 275 to 276, and 302 to 303; these read EI and EN.

Belongs to the class I-like SAM-binding methyltransferase superfamily. TRM5/TYW2 family.

The protein resides in the cytoplasm. It is found in the nucleus. It carries out the reaction 4-demethylwyosine(37) in tRNA(Phe) + S-adenosyl-L-methionine = 4-demethyl-7-[(3S)-3-amino-3-carboxypropyl]wyosine(37) in tRNA(Phe) + S-methyl-5'-thioadenosine + H(+). Its pathway is tRNA modification; wybutosine-tRNA(Phe) biosynthesis. Its function is as follows. S-adenosyl-L-methionine-dependent transferase that acts as a component of the wybutosine biosynthesis pathway. Wybutosine is a hyper modified guanosine with a tricyclic base found at the 3'-position adjacent to the anticodon of eukaryotic phenylalanine tRNA. Catalyzes the transfer of the alpha-amino-alpha-carboxypropyl (acp) group from S-adenosyl-L-methionine to the C-7 position of 4-demethylwyosine (imG-14) to produce wybutosine-86. In Schizosaccharomyces pombe (strain 972 / ATCC 24843) (Fission yeast), this protein is tRNA wybutosine-synthesizing protein 2 (trm12).